The primary structure comprises 309 residues: Olfactory receptor 10J5 (309 aa).

The Extracellular segment spans residues 1–25 (MKRKNFTEVSEFIFLGFSSFGKHQI). A glycan (N-linked (GlcNAc...) asparagine) is linked at Asn5. The helical transmembrane segment at 26–46 (TLFVVFLTVYILTLVANIIIV) threads the bilayer. Over 47–54 (TIICIDHH) the chain is Cytoplasmic. Residues 55-75 (LHTPMYFFLSMLASSETVYTL) form a helical membrane-spanning segment. Residues 76–99 (VIVPRMLLSLIFHNQPISLAGCAT) lie on the Extracellular side of the membrane. Cys97 and Cys188 form a disulfide bridge. Residues 100–120 (QMFFFVILATNNCFLLTAMGY) form a helical membrane-spanning segment. At 121 to 139 (DRYVAICRPLRYTVIMSKG) the chain is on the cytoplasmic side. A helical transmembrane segment spans residues 140 to 160 (LCAQLVCGSFGIGLTMAVLHV). Over 161-196 (TAMFNLPFCGTVVDHFFCDIYPVMKLSCIDTTINEI) the chain is Extracellular. A helical transmembrane segment spans residues 197-216 (INYGVSSFVIFVPIGLIFIS). The Cytoplasmic segment spans residues 217-236 (YVLVISSILQIASAEGRKKT). Residues 237 to 257 (FATCVSHLTVVIVHCGCASIA) traverse the membrane as a helical segment. At 258–270 (YLKPKSESSIEKD) the chain is on the extracellular side. A helical membrane pass occupies residues 271-291 (LVLSVTYTIITPLLNPVVYSL). The Cytoplasmic segment spans residues 292–309 (RNKEVKDALCRVVGRNIS).

Belongs to the G-protein coupled receptor 1 family. Expressed in both the aorta, the coronary artery and umbilical vein endothelial cells (HUVECs) (at protein level).

The protein localises to the cell membrane. Its function is as follows. Olfactory receptor. Activated by the synthetic floral odorant, lyral, and by alpha-cedrene, a sesquiterpene constituent of cedarwood oil. Its activation increases intracellular Ca(2+). Acts as a key regulator of myogenesis through its actions on cell migration and adhesion by activating the Ca(2+)-dependent AKT signal transduction pathway. Also acts as a regulator of angiogenesis. Moreover, plays a role in the regulation of lipid accumulation in hepatocytes via the cAMP-PKA pathway. May be involved in sperm chemotaxis and motility. The protein is Olfactory receptor 10J5 of Homo sapiens (Human).